Reading from the N-terminus, the 464-residue chain is Soluble pyridine nucleotide transhydrogenase (464 aa).

An FAD-binding site is contributed by 35–44 (DSRRQVGGNC).

This sequence belongs to the class-I pyridine nucleotide-disulfide oxidoreductase family. Requires FAD as cofactor.

The protein localises to the cytoplasm. It catalyses the reaction NAD(+) + NADPH = NADH + NADP(+). In terms of biological role, conversion of NADPH, generated by peripheral catabolic pathways, to NADH, which can enter the respiratory chain for energy generation. This Pseudomonas fluorescens (strain SBW25) protein is Soluble pyridine nucleotide transhydrogenase.